We begin with the raw amino-acid sequence, 148 residues long: Glutamyl-tRNA(Gln) amidotransferase subunit C, mitochondrial (148 aa).

This sequence belongs to the GatC family. As to quaternary structure, subunit of the heterotrimeric GatCAB amidotransferase (AdT) complex, composed of A, B and C subunits.

It localises to the mitochondrion. It carries out the reaction L-glutamyl-tRNA(Gln) + L-glutamine + ATP + H2O = L-glutaminyl-tRNA(Gln) + L-glutamate + ADP + phosphate + H(+). Allows the formation of correctly charged Gln-tRNA(Gln) through the transamidation of misacylated Glu-tRNA(Gln) in the mitochondria. The reaction takes place in the presence of glutamine and ATP through an activated gamma-phospho-Glu-tRNA(Gln). This chain is Glutamyl-tRNA(Gln) amidotransferase subunit C, mitochondrial, found in Drosophila sechellia (Fruit fly).